Reading from the N-terminus, the 191-residue chain is Protein YceI (191 aa).

An N-terminal signal peptide occupies residues 1-22; sequence MKKNLLGFTLASLLFTTGSAVA.

Belongs to the UPF0312 family. Type 1 subfamily.

The protein localises to the periplasm. This Salmonella newport (strain SL254) protein is Protein YceI.